Reading from the N-terminus, the 107-residue chain is Iron-sulfur cluster assembly protein CyaY (107 aa).

It belongs to the frataxin family.

Its function is as follows. Involved in iron-sulfur (Fe-S) cluster assembly. May act as a regulator of Fe-S biogenesis. The chain is Iron-sulfur cluster assembly protein CyaY from Yersinia pseudotuberculosis serotype O:1b (strain IP 31758).